A 131-amino-acid chain; its full sequence is Holo-[acyl-carrier-protein] synthase (131 aa).

2 residues coordinate Mg(2+): aspartate 8 and glutamate 57.

Belongs to the P-Pant transferase superfamily. AcpS family. It depends on Mg(2+) as a cofactor.

It localises to the cytoplasm. The enzyme catalyses apo-[ACP] + CoA = holo-[ACP] + adenosine 3',5'-bisphosphate + H(+). Its function is as follows. Transfers the 4'-phosphopantetheine moiety from coenzyme A to a Ser of acyl-carrier-protein. The chain is Holo-[acyl-carrier-protein] synthase from Thiobacillus denitrificans (strain ATCC 25259 / T1).